A 694-amino-acid polypeptide reads, in one-letter code: Polyphosphate kinase (694 aa).

Asn45 provides a ligand contact to ATP. Residues Arg367 and Arg397 each coordinate Mg(2+). The active-site Phosphohistidine intermediate is the His427. Residues Tyr460, Arg553, and His580 each coordinate ATP.

The protein belongs to the polyphosphate kinase 1 (PPK1) family. Requires Mg(2+) as cofactor. In terms of processing, an intermediate of this reaction is the autophosphorylated ppk in which a phosphate is covalently linked to a histidine residue through a N-P bond.

It catalyses the reaction [phosphate](n) + ATP = [phosphate](n+1) + ADP. In terms of biological role, catalyzes the reversible transfer of the terminal phosphate of ATP to form a long-chain polyphosphate (polyP). This is Polyphosphate kinase from Campylobacter coli.